The following is a 181-amino-acid chain: MSTAASDSGVEKLVEENKREEVKKNEEEKEFDLGLEENPDSVKKPRKRLAKFDEERLISENGIPKLRKMMRKVKLKGKGHEAKDLKQLLGMYHIWTHELYPRATFDDSISYLKTLGKHRSVKVRRRGWINEIAVENGSDSNASLFTGPSSNSLVNLTSGDPYVQDTADDAFVAQDNDTQLE.

Positions 1-47 are disordered; it reads MSTAASDSGVEKLVEENKREEVKKNEEEKEFDLGLEENPDSVKKPRK. The span at 9 to 27 shows a compositional bias: basic and acidic residues; the sequence is GVEKLVEENKREEVKKNEE. Acidic residues predominate over residues 28-39; the sequence is EKEFDLGLEENP.

Belongs to the CSM3 family. As to quaternary structure, fork protection complex (FPC) consisting of swi1 and swi3 interacts with mat1 cis-acting sequences and mat1-proximal polar-terminator of replication (RTS1).

It is found in the nucleus. Functionally, forms a fork protection complex (FPC) with swi1. FPC coordinates leading and lagging strand synthesis and moves with the replication fork. It is required for programmed fork-pausing which is necessary for mating-type switching. FPC stabilizes replication forks in a configuration that is recognized by replication checkpoint sensors. It is involved in termination at the mat1-proximal polar-terminator of replication (RTS1) and also required for activation of the Rad53-like checkpoint kinase cds1. This is Swi1-interacting protein swi3 (swi3) from Schizosaccharomyces pombe (strain 972 / ATCC 24843) (Fission yeast).